The sequence spans 153 residues: Endoribonuclease YbeY (153 aa).

The Zn(2+) site is built by His-113, His-117, and His-123.

Belongs to the endoribonuclease YbeY family. Zn(2+) is required as a cofactor.

Its subcellular location is the cytoplasm. Its function is as follows. Single strand-specific metallo-endoribonuclease involved in late-stage 70S ribosome quality control and in maturation of the 3' terminus of the 16S rRNA. The chain is Endoribonuclease YbeY from Aliivibrio fischeri (strain MJ11) (Vibrio fischeri).